The sequence spans 205 residues: Protein N-terminal glutamine amidohydrolase (205 aa).

Catalysis depends on residues C20, H74, and D90.

This sequence belongs to the NTAQ1 family. Monomer.

It carries out the reaction N-terminal L-glutaminyl-[protein] + H2O = N-terminal L-glutamyl-[protein] + NH4(+). Mediates the side-chain deamidation of N-terminal glutamine residues to glutamate, an important step in N-end rule pathway of protein degradation. Conversion of the resulting N-terminal glutamine to glutamate renders the protein susceptible to arginylation, polyubiquitination and degradation as specified by the N-end rule. Does not act on substrates with internal or C-terminal glutamine and does not act on non-glutamine residues in any position. This Drosophila melanogaster (Fruit fly) protein is Protein N-terminal glutamine amidohydrolase (tun).